The chain runs to 427 residues: Gamma-glutamyl phosphate reductase (427 aa).

This sequence belongs to the gamma-glutamyl phosphate reductase family.

The protein resides in the cytoplasm. The enzyme catalyses L-glutamate 5-semialdehyde + phosphate + NADP(+) = L-glutamyl 5-phosphate + NADPH + H(+). It functions in the pathway amino-acid biosynthesis; L-proline biosynthesis; L-glutamate 5-semialdehyde from L-glutamate: step 2/2. Its function is as follows. Catalyzes the NADPH-dependent reduction of L-glutamate 5-phosphate into L-glutamate 5-semialdehyde and phosphate. The product spontaneously undergoes cyclization to form 1-pyrroline-5-carboxylate. In Brucella melitensis biotype 2 (strain ATCC 23457), this protein is Gamma-glutamyl phosphate reductase.